The following is a 280-amino-acid chain: MTILQAIVLAIVEGLTEFLPVSSTGHMIIAEGIMGVESTSFVRAFTVMIQFGAILSVLVLYRKRFFCFPVAPRALGQGKGKEFMSRFDLYWKLLIALVPAVILGFLFEDWVDRMLGSVWVVAVVLFLGGIFMLFVDKLFASSDRGEITYPKAFVIGLFQCLAIFLPGLSRSMATIVGGQQQKLSRKAAAEFSFFLAVPTMLGATLLKAYKLYKEGGIEIFREHMIVLLVGNIVAFIVALAAIKFFIGFLTRYGFKAFGYYRILVGGLLIVLMLSGVSLAV.

A run of 8 helical transmembrane segments spans residues 1–21, 41–61, 87–107, 115–135, 147–167, 186–206, 225–245, and 260–280; these read MTIL…FLPV, FVRA…LVLY, FDLY…GFLF, LGSV…MLFV, ITYP…FLPG, KAAA…ATLL, IVLL…IKFF, and YRIL…SLAV.

Belongs to the UppP family.

The protein resides in the cell inner membrane. It catalyses the reaction di-trans,octa-cis-undecaprenyl diphosphate + H2O = di-trans,octa-cis-undecaprenyl phosphate + phosphate + H(+). Catalyzes the dephosphorylation of undecaprenyl diphosphate (UPP). Confers resistance to bacitracin. The protein is Undecaprenyl-diphosphatase of Porphyromonas gingivalis (strain ATCC 33277 / DSM 20709 / CIP 103683 / JCM 12257 / NCTC 11834 / 2561).